Consider the following 640-residue polypeptide: MPVITLPDGSQRSFDHAVSIAEVAASIGAGLAKATVAGKVDGKLVDACDLISNDATLQIITPKDEEGLEIIRHSCAHLVGHAVKQLYPTAKMVIGPVIDEGFYYDIAYERPFTPEDMAAIEKRMMELIEKDYDVVKKMTPRAEVIDVFTARGEDYKLRLVEDMPDEQAMGLYYHEEYVDMCRGPHVPNTRFLKAFKLTKLSGAYWRGDAKNEQLQRVYGTAWADKKQLAAYIQRIEEAEKRDHRKIGKQLDLFHLQEEAPGMVFWHANGWTVYQVLEQYMRGVQRENGYQEIKTPQVVDRILWERSGHWSNYAENMFTTSSESRDYAVKPMNCPCHVQVFNQGLKSYRDLPLRLAEFGACHRNEPSGALHGIMRVRGFVQDDAHIFCTEEQVKKEAADFIKLTLDVYKDFGFSDIAMKLSTRPAKRVGSEELWDRAETALADALNESGLEWEYQPGEGAFYGPKIEFTLRDCLGRNWQCGTLQYDPNLPERLDASYIAEDNSRVRPVMLHRAILGSFERFIGMLIEHYAGVFPAWLAPTQAVIMNITDKQTDFALEVEKSLNGSGFRAKSDLRNEKIGFKIREHTLLKVPYLLVIGDREVETQTVAVRTREGADLGSMPVAQFVELLTQAVSRRGRQESE.

Residues 1–61 (MPVITLPDGS…SNDATLQIIT (61 aa)) enclose the TGS domain. The catalytic stretch occupies residues 242–533 (DHRKIGKQLD…LIEHYAGVFP (292 aa)). Zn(2+) is bound by residues cysteine 333, histidine 384, and histidine 510.

This sequence belongs to the class-II aminoacyl-tRNA synthetase family. In terms of assembly, homodimer. Zn(2+) serves as cofactor.

It is found in the cytoplasm. It carries out the reaction tRNA(Thr) + L-threonine + ATP = L-threonyl-tRNA(Thr) + AMP + diphosphate + H(+). In terms of biological role, catalyzes the attachment of threonine to tRNA(Thr) in a two-step reaction: L-threonine is first activated by ATP to form Thr-AMP and then transferred to the acceptor end of tRNA(Thr). Also edits incorrectly charged L-seryl-tRNA(Thr). The protein is Threonine--tRNA ligase of Pseudomonas putida (strain ATCC 700007 / DSM 6899 / JCM 31910 / BCRC 17059 / LMG 24140 / F1).